The following is a 304-amino-acid chain: Secreted mono- and diacylglycerol lipase MDL4 (304 aa).

Residues 1-19 form the signal peptide; that stretch reads MRFGGVVSLVLGFIVSVLA. The cysteines at positions 55 and 297 are disulfide-linked. Residues Asn102 and Asn161 are each glycosylated (N-linked (GlcNAc...) asparagine). Ser171 serves as the catalytic Nucleophile. Residue Asp228 is part of the active site. Asn253 is a glycosylation site (N-linked (GlcNAc...) asparagine). His281 is an active-site residue.

The protein belongs to the AB hydrolase superfamily. Lipase family. Class 3 subfamily.

The protein localises to the secreted. It localises to the cell wall. It catalyses the reaction a monoacylglycerol + H2O = glycerol + a fatty acid + H(+). The enzyme catalyses a diacylglycerol + H2O = a monoacylglycerol + a fatty acid + H(+). Its function is as follows. Secreted lipase involved in Dandruff and seborrheic dermatitis (D/SD) probably via lipase-mediated breakdown of sebaceous lipids and release of irritating free fatty acids. Shows activity against monoglyceride and diglyceride substrates, but not triglyceride substrates and does not exhibit regio-selective production of diacylglycerols. Cleaves oleic acid from 1,2 isomers of diolein on both the 1 and the 2 position of the glycerol backbone, resulting mainly in free fatty acids but no monoolein is detected. Shows activity on monoolein and liberates mostly free fatty acids, but can also perform the reverse reaction and produce diolein. The polypeptide is Secreted mono- and diacylglycerol lipase MDL4 (Malassezia globosa (strain ATCC MYA-4612 / CBS 7966) (Dandruff-associated fungus)).